We begin with the raw amino-acid sequence, 487 residues long: Glutamate--tRNA ligase (487 aa).

The 'HIGH' region signature appears at Pro-11–Asn-21. Zn(2+)-binding residues include Cys-108, Cys-110, Cys-135, and Asp-137. The short motif at Lys-245 to Arg-249 is the 'KMSKS' region element. Lys-248 contacts ATP.

It belongs to the class-I aminoacyl-tRNA synthetase family. Glutamate--tRNA ligase type 1 subfamily. Monomer. Zn(2+) is required as a cofactor.

The protein resides in the cytoplasm. The catalysed reaction is tRNA(Glu) + L-glutamate + ATP = L-glutamyl-tRNA(Glu) + AMP + diphosphate. In terms of biological role, catalyzes the attachment of glutamate to tRNA(Glu) in a two-step reaction: glutamate is first activated by ATP to form Glu-AMP and then transferred to the acceptor end of tRNA(Glu). The chain is Glutamate--tRNA ligase from Dehalococcoides mccartyi (strain CBDB1).